The sequence spans 379 residues: Epoxyqueuosine reductase (379 aa).

Asp-140 acts as the Proton donor in catalysis. The region spanning 184–214 (FEPDTPASDLCGSCNQCVKACPTGSLLGEGK) is the 4Fe-4S ferredoxin-type domain. Residues Cys-194, Cys-197, Cys-200, Cys-204, Cys-220, Cys-246, Cys-249, and Cys-253 each contribute to the [4Fe-4S] cluster site. The HEAT-like PBS-type repeat unit spans residues 307 to 332 (QRNAIIILARYKDKTAVPDLIDCLQN).

The protein belongs to the QueG family. Monomer. Cob(II)alamin serves as cofactor. Requires [4Fe-4S] cluster as cofactor.

The protein resides in the cytoplasm. It carries out the reaction epoxyqueuosine(34) in tRNA + AH2 = queuosine(34) in tRNA + A + H2O. Its pathway is tRNA modification; tRNA-queuosine biosynthesis. Functionally, catalyzes the conversion of epoxyqueuosine (oQ) to queuosine (Q), which is a hypermodified base found in the wobble positions of tRNA(Asp), tRNA(Asn), tRNA(His) and tRNA(Tyr). This is Epoxyqueuosine reductase from Listeria monocytogenes serovar 1/2a (strain ATCC BAA-679 / EGD-e).